Consider the following 119-residue polypeptide: Large ribosomal subunit protein uL22c (119 aa).

Belongs to the universal ribosomal protein uL22 family. Part of the 50S ribosomal subunit.

It is found in the plastid. The protein resides in the chloroplast. This protein binds specifically to 23S rRNA. In terms of biological role, the globular domain of the protein is located near the polypeptide exit tunnel on the outside of the subunit, while an extended beta-hairpin is found that lines the wall of the exit tunnel in the center of the 70S ribosome. This chain is Large ribosomal subunit protein uL22c (rpl22), found in Mesostigma viride (Green alga).